The sequence spans 182 residues: MARLLWLLRGLTLGTAPRRAVRGQAGGGGPGTGPGLGEAGSLATCELPLAKSEWQKKLTPEQFYVTREKGTEPPFSGIYLNNKEAGMYHCVCCDSPLFSSEKKYCSGTGWPSFSEAHGTSGSDESHTGILRRLDTSLGSARTEVVCKQCEAHLGHVFPDGPGPNGQRFCINSVALKFKPRKH.

The transit peptide at 1–20 (MARLLWLLRGLTLGTAPRRA) directs the protein to the mitochondrion. In terms of domain architecture, MsrB spans 51-180 (KSEWQKKLTP…NSVALKFKPR (130 aa)). Positions 90, 93, 146, and 149 each coordinate Zn(2+). The active-site Nucleophile is the C169.

This sequence belongs to the MsrB Met sulfoxide reductase family. Interacts with DAOA; the interaction is direct. Requires Zn(2+) as cofactor. Ubiquitous. Detected in retina, ocular ciliary body, skeletal muscle, heart, colon, bone marrow, cerebellum, small intestine, fetal brain, fetal liver, kidney, spinal cord, lung, placenta and prostate.

Its subcellular location is the mitochondrion. It carries out the reaction L-methionyl-[protein] + [thioredoxin]-disulfide + H2O = L-methionyl-(R)-S-oxide-[protein] + [thioredoxin]-dithiol. It catalyses the reaction [thioredoxin]-disulfide + L-methionine + H2O = L-methionine (R)-S-oxide + [thioredoxin]-dithiol. In terms of biological role, methionine-sulfoxide reductase that specifically reduces methionine (R)-sulfoxide back to methionine. While in many cases, methionine oxidation is the result of random oxidation following oxidative stress, methionine oxidation is also a post-translational modification that takes place on specific residue. Upon oxidative stress, may play a role in the preservation of mitochondrial integrity by decreasing the intracellular reactive oxygen species build-up through its scavenging role, hence contributing to cell survival and protein maintenance. The polypeptide is Methionine-R-sulfoxide reductase B2, mitochondrial (MSRB2) (Homo sapiens (Human)).